The sequence spans 404 residues: Phosphoglycerate kinase (404 aa).

Substrate contacts are provided by residues 22-24, Arg-37, 60-63, Arg-119, and Arg-156; these read DLN and HLGR. ATP is bound by residues Lys-206, Gly-302, Glu-333, and 359 to 362; that span reads GGDS.

This sequence belongs to the phosphoglycerate kinase family. In terms of assembly, monomer.

The protein resides in the cytoplasm. The enzyme catalyses (2R)-3-phosphoglycerate + ATP = (2R)-3-phospho-glyceroyl phosphate + ADP. It participates in carbohydrate degradation; glycolysis; pyruvate from D-glyceraldehyde 3-phosphate: step 2/5. The protein is Phosphoglycerate kinase of Clavibacter michiganensis subsp. michiganensis (strain NCPPB 382).